A 106-amino-acid chain; its full sequence is UPF0145 protein Nmul_A0734 (106 aa).

Belongs to the UPF0145 family.

This is UPF0145 protein Nmul_A0734 from Nitrosospira multiformis (strain ATCC 25196 / NCIMB 11849 / C 71).